The chain runs to 737 residues: Delta and Notch-like epidermal growth factor-related receptor (737 aa).

The signal sequence occupies residues 1-34; the sequence is MQPRRAQAPGAQLLPALALLLLLLGAGPRGSSLA. Residues 35 to 640 lie on the Extracellular side of the membrane; that stretch reads NPVPAAPLSA…LTNMPRHSLY (606 aa). 2 EGF-like domains span residues 44–92 and 94–133; these read APGP…ANCQ and VADP…PNCE. The tract at residues 44–133 is interaction with NOTCH1; sequence APGPCAAQPC…NEGYEGPNCE (90 aa). Disulfide bonds link C48–C59, C53–C80, C82–C91, C98–C108, C103–C121, and C123–C132. Residue N223 is glycosylated (N-linked (GlcNAc...) asparagine). EGF-like domains lie at 309–348, 349–390, 392–428, 430–466, and 468–503; these read PGES…TFCE, EYDA…ELCQ, KIDY…SACE, KVDP…PTCA, and LIDF…LYCE. Disulfide bonds link C319-C336, C338-C347, C353-C364, C358-C378, C380-C389, C396-C407, C401-C416, C418-C427, C434-C445, C439-C454, C456-C465, C472-C482, C477-C491, C493-C502, C509-C520, C514-C529, C531-C540, C547-C558, C552-C567, C569-C578, C585-C596, C590-C605, and C607-C616. Positions 505-541 constitute an EGF-like 8; calcium-binding domain; the sequence is EYNECLSAPCLNAATCRDLVNGYECVCLAEYKGTHCE. The EGF-like 9 domain maps to 543 to 579; it reads YKDPCANVSCLNGATCDSDGLNGTCICAPGFTGEECD. The 23-residue stretch at 546–568 folds into the Follistatin-like domain; the sequence is PCANVSCLNGATCDSDGLNGTCI. N564 carries N-linked (GlcNAc...) asparagine glycosylation. Residues 581–617 form the EGF-like 10; calcium-binding domain; that stretch reads DINECDSNPCHHGGSCLDQPNGYNCHCPHGWVGANCE. A helical membrane pass occupies residues 641–661; that stretch reads IIIGALCVAFILMLIILIVGI. Residues 662 to 737 lie on the Cytoplasmic side of the membrane; it reads CRISRIEYQG…LVTLIKTKDL (76 aa). The interaction with AP1G1 and somatodendritic targeting stretch occupies residues 677–680; sequence YEEF. Position 685 is a phosphoserine (S685). 2 positions are modified to phosphotyrosine: Y711 and Y721. Phosphoserine is present on S722.

As to quaternary structure, interacts with AP1G1. Interacts with NOTCH1. In terms of tissue distribution, expressed in brain, spinal cord and adrenal gland.

It localises to the cell membrane. In terms of biological role, activator of the NOTCH1 pathway. May mediate neuron-glia interaction during astrocytogenesis. The polypeptide is Delta and Notch-like epidermal growth factor-related receptor (DNER) (Homo sapiens (Human)).